The primary structure comprises 721 residues: Polyribonucleotide nucleotidyltransferase (721 aa).

Mg(2+)-binding residues include D495 and D501. Positions 562 to 621 (PRLLSFRIDPELIGTVIGPGGRTIKGITERTNTKIDIEDGGIVTIASHDGAAAEEAQKII) constitute a KH domain. The S1 motif domain occupies 631 to 699 (GEIFPGVVTR…SRGRINLTLR (69 aa)).

It belongs to the polyribonucleotide nucleotidyltransferase family. Requires Mg(2+) as cofactor.

Its subcellular location is the cytoplasm. It catalyses the reaction RNA(n+1) + phosphate = RNA(n) + a ribonucleoside 5'-diphosphate. Functionally, involved in mRNA degradation. Catalyzes the phosphorolysis of single-stranded polyribonucleotides processively in the 3'- to 5'-direction. The chain is Polyribonucleotide nucleotidyltransferase from Prochlorococcus marinus subsp. pastoris (strain CCMP1986 / NIES-2087 / MED4).